Reading from the N-terminus, the 841-residue chain is Protein translocase subunit SecA (841 aa).

ATP-binding positions include 79–80 (MF), glutamine 85, 103–107 (GEGKT), and aspartate 492. Positions 786 to 813 (REEVVQGQTTAHQPQEGDDNKKAKKAPV) are disordered. Positions 825, 827, 836, and 837 each coordinate Zn(2+).

Belongs to the SecA family. As to quaternary structure, part of the essential Sec protein translocation apparatus which comprises SecA, SecYEG and auxiliary proteins SecDF. Other proteins may be involved. Monomer and many different homodimers can be isolated, some of which are not formed in the presence of a synthetic signal peptide. A single SecA monomer interacts with SecY in the channel. Only shows some colocalization with FloA or FloT membrane assemblies. Requires Zn(2+) as cofactor.

The protein resides in the cell membrane. It is found in the cytoplasm. The protein localises to the membrane raft. It catalyses the reaction ATP + H2O + cellular proteinSide 1 = ADP + phosphate + cellular proteinSide 2.. In terms of biological role, part of the Sec protein translocase complex. Interacts with the SecYEG preprotein conducting channel. Has a central role in coupling the hydrolysis of ATP to the transfer of proteins into and across the cell membrane, serving as an ATP-driven molecular motor driving the stepwise translocation of polypeptide chains across the membrane. This is Protein translocase subunit SecA from Bacillus subtilis (strain 168).